A 612-amino-acid chain; its full sequence is RNA polymerase sigma factor RpoD (612 aa).

The segment covering 191–206 has biased composition (acidic residues); sequence QQNNEEDEENNQEDHE. The disordered stretch occupies residues 191–210; the sequence is QQNNEEDEENNQEDHEDDHS. The interval 378–448 is sigma-70 factor domain-2; sequence MVEANLRLVI…TRSIADQART (71 aa). The Interaction with polymerase core subunit RpoC signature appears at 402–405; the sequence is DLIQ. The segment at 457–533 is sigma-70 factor domain-3; sequence ETINKLNRIS…DTTLELPLDS (77 aa). Residues 546-599 form a sigma-70 factor domain-4 region; sequence VLSGLTAREAKVLRMRFGIDMNTDHTLEEVGKQFDVTRERIRQIEAKALRKLRH. The H-T-H motif DNA-binding region spans 572-591; it reads LEEVGKQFDVTRERIRQIEA.

The protein belongs to the sigma-70 factor family. RpoD/SigA subfamily. As to quaternary structure, interacts transiently with the RNA polymerase catalytic core.

It is found in the cytoplasm. In terms of biological role, sigma factors are initiation factors that promote the attachment of RNA polymerase to specific initiation sites and are then released. This sigma factor is the primary sigma factor during exponential growth. This is RNA polymerase sigma factor RpoD from Buchnera aphidicola subsp. Acyrthosiphon pisum (strain APS) (Acyrthosiphon pisum symbiotic bacterium).